A 177-amino-acid chain; its full sequence is Bifunctional protein PyrR (177 aa).

The PRPP-binding signature appears at 99 to 111 (VVLVDDVLFTGRT).

Belongs to the purine/pyrimidine phosphoribosyltransferase family. PyrR subfamily.

It carries out the reaction UMP + diphosphate = 5-phospho-alpha-D-ribose 1-diphosphate + uracil. Regulates the transcription of the pyrimidine nucleotide (pyr) operon in response to exogenous pyrimidines. In terms of biological role, also displays a weak uracil phosphoribosyltransferase activity which is not physiologically significant. In Geobacter sp. (strain M21), this protein is Bifunctional protein PyrR.